The following is a 522-amino-acid chain: GMP synthase [glutamine-hydrolyzing] (522 aa).

The 197-residue stretch at 8-204 (RLLIIDFGSQ…FVRLAGFKGD (197 aa)) folds into the Glutamine amidotransferase type-1 domain. The active-site Nucleophile is cysteine 86. Catalysis depends on residues histidine 179 and glutamate 181. Positions 205-397 (WTMGAYREEA…LGLPASFIGR (193 aa)) constitute a GMPS ATP-PPase domain. 232 to 238 (SGGVDSS) provides a ligand contact to ATP.

As to quaternary structure, homodimer.

The enzyme catalyses XMP + L-glutamine + ATP + H2O = GMP + L-glutamate + AMP + diphosphate + 2 H(+). The protein operates within purine metabolism; GMP biosynthesis; GMP from XMP (L-Gln route): step 1/1. Catalyzes the synthesis of GMP from XMP. This Roseobacter denitrificans (strain ATCC 33942 / OCh 114) (Erythrobacter sp. (strain OCh 114)) protein is GMP synthase [glutamine-hydrolyzing].